We begin with the raw amino-acid sequence, 314 residues long: R2-like ligand binding oxidase (314 aa).

Mn(2+) contacts are provided by glutamate 68, glutamate 101, and histidine 104. The 3-(O4'-tyrosyl)-valine (Val-Tyr) cross-link spans 71-162 (VTEDIQPFMS…AAQVRASVTY (92 aa)). Glutamate 101 contributes to the Fe cation binding site. 3 residues coordinate Fe cation: glutamate 167, glutamate 202, and histidine 205.

It belongs to the ribonucleoside diphosphate reductase small chain family. R2-like ligand binding oxidase subfamily. Homodimer. Fe cation is required as a cofactor. The cofactor is Mn(2+).

Its function is as follows. Probable oxidase that might be involved in lipid metabolism. The sequence is that of R2-like ligand binding oxidase from Mycobacterium bovis (strain ATCC BAA-935 / AF2122/97).